The primary structure comprises 254 residues: 5-oxoprolinase subunit A (254 aa).

This sequence belongs to the LamB/PxpA family. Forms a complex composed of PxpA, PxpB and PxpC.

It carries out the reaction 5-oxo-L-proline + ATP + 2 H2O = L-glutamate + ADP + phosphate + H(+). Functionally, catalyzes the cleavage of 5-oxoproline to form L-glutamate coupled to the hydrolysis of ATP to ADP and inorganic phosphate. In Bacillus mycoides (strain KBAB4) (Bacillus weihenstephanensis), this protein is 5-oxoprolinase subunit A.